We begin with the raw amino-acid sequence, 523 residues long: MKYVVQEWLRITTLLFIAQAVSAMVLPNATLLEELLEKYMDEDGEWWIANVSRKRAITDSDMQSILDLHNKLRGQVYPPASNMEYMTWDTELERSAESWAETCLWEHGPASLLPSIGQNLGAHWGRYRPPTFHVQAWYDEVRDFTYPHPHECNPYCPYKCSGPVCTHYTQVVWATSSRIGCAINLCHNMNIWGQIWPKAVYLVCNYSPKGNWWGHAPYKPGRPCSACPPSFGGGCRENLCYREGSERPYSPHEPEEETNEIERQRSKAQDATAQSRPRTHSPSGSTGSEDSEKNEVISTQQMSQIVSCEVRLRDQCKGTTCNRYECPAGCLDSKAKVIGSVHYEMQSSICKAAIHYGILDNEGGWVDVTRQGRKNYFIKSYRNGIQSIGKYQSANSFTVSKVTVQAITCETTVEQLCPFQKPASHCPRVYCPHNCMQANPHYARVIGTRIYSDISSICRAAVHAGVVRNEGGYVDVMPVDKRKVYIASFLNGIFSESLQNPPGKQGIQSICCRLNQVDYKTGK.

Positions 1–23 are cleaved as a signal peptide; that stretch reads MKYVVQEWLRITTLLFIAQAVSA. Residues 66–206 enclose the SCP domain; it reads LDLHNKLRGQ…PKAVYLVCNY (141 aa). The interval 246–298 is disordered; it reads ERPYSPHEPEEETNEIERQRSKAQDATAQSRPRTHSPSGSTGSEDSEKNEVIS. A compositionally biased stretch (polar residues) spans 269 to 288; that stretch reads QDATAQSRPRTHSPSGSTGS. 2 LCCL domains span residues 302 to 397 and 403 to 505; these read MSQI…ANSF and TVQA…PGKQ. Cystine bridges form between Cys-308-Cys-326, Cys-330-Cys-350, Cys-409-Cys-431, and Cys-435-Cys-458.

The protein belongs to the CRISP family.

It is found in the secreted. In Gallus gallus (Chicken), this protein is Cysteine-rich secretory protein LCCL domain-containing 1 (CRISPLD1).